The primary structure comprises 444 residues: uncharacterized protein (444 aa).

In terms of domain architecture, Radical SAM core spans glycine 164–arginine 381. Cysteine 178, cysteine 182, and cysteine 185 together coordinate [4Fe-4S] cluster.

[4Fe-4S] cluster is required as a cofactor.

This is an uncharacterized protein from Methanocaldococcus jannaschii (strain ATCC 43067 / DSM 2661 / JAL-1 / JCM 10045 / NBRC 100440) (Methanococcus jannaschii).